We begin with the raw amino-acid sequence, 398 residues long: DNA polymerase IV (398 aa).

One can recognise a UmuC domain in the interval 5 to 187 (IFLVDMNAFF…LSIKSMHGVG (183 aa)). The Mg(2+) site is built by aspartate 9 and aspartate 105. Residue glutamate 106 is part of the active site.

It belongs to the DNA polymerase type-Y family. As to quaternary structure, monomer. Mg(2+) is required as a cofactor.

Its subcellular location is the cytoplasm. It catalyses the reaction DNA(n) + a 2'-deoxyribonucleoside 5'-triphosphate = DNA(n+1) + diphosphate. In terms of biological role, poorly processive, error-prone DNA polymerase involved in untargeted mutagenesis. Copies undamaged DNA at stalled replication forks, which arise in vivo from mismatched or misaligned primer ends. These misaligned primers can be extended by PolIV. Exhibits no 3'-5' exonuclease (proofreading) activity. May be involved in translesional synthesis, in conjunction with the beta clamp from PolIII. This is DNA polymerase IV from Alkaliphilus oremlandii (strain OhILAs) (Clostridium oremlandii (strain OhILAs)).